The chain runs to 552 residues: Gamma-aminobutyric acid receptor subunit alpha-4 (552 aa).

The signal sequence occupies residues 1-35 (MVSVQKVPAIALCSGVSLALLHFLCLAACLNESPG). Topologically, residues 36–259 (QNSKDEKLCP…FHLRRKMGYF (224 aa)) are extracellular. N-linked (GlcNAc...) asparagine glycosylation occurs at asparagine 47. Arginine 100 is a binding site for 4-aminobutanoate. Residues asparagine 144 and asparagine 157 are each glycosylated (N-linked (GlcNAc...) asparagine). Position 163 (threonine 163) interacts with 4-aminobutanoate. A disulfide bridge links cysteine 172 with cysteine 186. A helical membrane pass occupies residues 260 to 280 (MIQTYIPCIMTVILSQVSFWI). At 281 to 284 (NKES) the chain is on the cytoplasmic side. A helical membrane pass occupies residues 285-305 (VPARTVFGITTVLTMTTLSIS). Topologically, residues 306 to 318 (ARHSLPKVSYATA) are extracellular. A helical membrane pass occupies residues 319–341 (MDWFIAVCFAFVFSALIEFAAVN). Topologically, residues 342-515 (YFTNIQMQKA…PPPSGSGTSK (174 aa)) are cytoplasmic. Disordered stretches follow at residues 353–480 (KKIS…FGSR) and 492–513 (GAAG…GSGT). The span at 396–406 (SESDVKSRTEV) shows a compositional bias: basic and acidic residues. Positions 407–422 (GNHSSKTSAVQESSEA) are enriched in polar residues. Over residues 445–458 (SAAARGLSSAASPS) the composition is skewed to low complexity. Over residues 500 to 509 (TPPPPAPPPS) the composition is skewed to pro residues. The helical transmembrane segment at 516–538 (IDKYARILFPVTFGAFNMVYWVV) threads the bilayer. Topologically, residues 539-552 (YLSKDTMEKSESLM) are extracellular.

The protein belongs to the ligand-gated ion channel (TC 1.A.9) family. Gamma-aminobutyric acid receptor (TC 1.A.9.5) subfamily. GABRA4 sub-subfamily. As to quaternary structure, heteropentamer, formed by a combination of alpha (GABRA1-6), beta (GABRB1-3), gamma (GABRG1-3), delta (GABRD), epsilon (GABRE), rho (GABRR1-3), pi (GABRP) and theta (GABRQ) chains, each subunit exhibiting distinct physiological and pharmacological properties. As to expression, expressed in the brain.

It localises to the cell membrane. The protein resides in the postsynaptic cell membrane. The enzyme catalyses chloride(in) = chloride(out). Potentiated by gaboxadol. Potentiated by histamine. Its function is as follows. Alpha subunit of the heteropentameric ligand-gated chloride channel gated by gamma-aminobutyric acid (GABA), a major inhibitory neurotransmitter in the brain. GABA-gated chloride channels, also named GABA(A) receptors (GABAAR), consist of five subunits arranged around a central pore and contain GABA active binding site(s) located at the alpha and beta subunit interface(s). Alpha-4/GABRA4 subunit often assembles with delta or gamma-2 subunits, in combination with beta subunits. When activated by GABA, GABAARs selectively allow the flow of chloride anions across the cell membrane down their electrochemical gradient. GABAARs containing alpha-4 are predominantly extrasynaptic, contributing to tonic inhibition in dentate granule cells and thalamic relay neurons. Extrasynaptic alpha-4-containing GABAARs control levels of excitability and network activity. GABAAR containing alpha-4-beta-3-delta subunits can simultaneously bind GABA and histamine where histamine binds at the interface of two neighboring beta subunits, which may be involved in the regulation of sleep and wakefulness. The polypeptide is Gamma-aminobutyric acid receptor subunit alpha-4 (Mus musculus (Mouse)).